The chain runs to 461 residues: Protein naked cuticle homolog 2 (461 aa).

Residues 1–106 (MGKFQSKHAA…DGEKAASREG (106 aa)) form a disordered region. G2 is lipidated: N-myristoyl glycine. 2 stretches are compositionally biased toward basic and acidic residues: residues 34–73 (RGAE…DKGS) and 97–106 (DGEKAASREG). Residues 121 to 186 (QCDVSVEEDN…LRVKLTVSPE (66 aa)) are interaction with DVL1, DVL2 and DVL3. One can recognise an EF-hand domain in the interval 127–162 (EEDNRQEWTFTLYDFDNSGKVTREDMSSLMHTIYEV). The Ca(2+) site is built by D140, D142, S144, K146, and D151. Disordered regions lie at residues 176–205 (TLRV…PTRG), 263–302 (YTSK…HAIH), 321–359 (TRAL…PGKA), 372–414 (SAQD…GQPT), and 441–461 (HEHH…FHPS). Basic and acidic residues predominate over residues 188–205 (SSKKECPLTGQDREPTRG). Residues 307-396 (QVLAEHVIPA…PPQPYGHKRY (90 aa)) are interaction with TGFA. Positions 341–350 (PKGPGKPLGT) are enriched in low complexity. Residues 380 to 390 (PQPPPQPPPQP) show a composition bias toward pro residues.

This sequence belongs to the NKD family. As to quaternary structure, interacts with RNF25, TGFA (via cytoplasmic domain), and PPP2R3A. Interacts with DVL1, DVL2 and DVL3. Ubiquitinated, leading to rapid proteasomal degradation. Interaction with TGFA interferes with RNF25 binding and protects against ubiquitination mediated by RNF25. As to expression, expressed in the cecum, colon, esophagus, ileum, jejunum, skin and stomach.

The protein localises to the cell membrane. The protein resides in the cytoplasm. Its subcellular location is the cytoplasmic vesicle. Its function is as follows. Cell autonomous antagonist of the canonical Wnt signaling pathway. May activate a second Wnt signaling pathway that controls planar cell polarity. Required for processing of TGFA and for targeting of TGFA to the basolateral membrane of polarized epithelial cells. The protein is Protein naked cuticle homolog 2 (Nkd2) of Mus musculus (Mouse).